A 246-amino-acid polypeptide reads, in one-letter code: Sulfate transporter CysZ (246 aa).

Helical transmembrane passes span Leu-24–Ala-44, Ile-69–Val-89, Leu-148–Phe-168, and Leu-214–Phe-234.

This sequence belongs to the CysZ family.

It is found in the cell inner membrane. Functionally, high affinity, high specificity proton-dependent sulfate transporter, which mediates sulfate uptake. Provides the sulfur source for the cysteine synthesis pathway. The protein is Sulfate transporter CysZ of Pseudomonas aeruginosa (strain ATCC 15692 / DSM 22644 / CIP 104116 / JCM 14847 / LMG 12228 / 1C / PRS 101 / PAO1).